The primary structure comprises 863 residues: Receptor-like protein 9DC3 (863 aa).

The first 21 residues, 1 to 21 (MGCVKLVFFMLYVFLFQLVSS), serve as a signal peptide directing secretion. The Extracellular portion of the chain corresponds to 22–812 (SSLPHLCPED…EEDSPMISWQ (791 aa)). An N-cap region spans residues 24–90 (LPHLCPEDQA…GVHCDETTGQ (67 aa)). Asn71 and Asn108 each carry an N-linked (GlcNAc...) asparagine glycan. The LRR 1; degenerate repeat unit spans residues 91–114 (VIALDLRCSQLQGKFHSNSSLFQL). LRR repeat units lie at residues 115–138 (SNLKRLDLSNNNFIGSLISPKFGE) and 140–163 (SDLTHLDLSDSSFTGVIPSEISHL). Residues 164-190 (SKLHVLLIGDQYGLSIVPHNFEPLLKN) form an LRR 4; degenerate repeat. N-linked (GlcNAc...) asparagine glycans are attached at residues Asn190, Asn203, and Asn211. LRR repeat units follow at residues 191-213 (LTQLRELNLYEVNLSSTVPSNFS), 214-237 (SHLTTLQLSGTGLRGLLPERVFHL), 240-262 (LEFLDLSYNSQLMVRFPTTKWNS), 264-286 (ASLMKLYVHSVNIADRIPESFSH), 287-311 (LTSLHELDMGYTNLSGPIPKPLWNL), and 312-336 (TNIESLDLRYNHLEGPIPQLPIFEK). Asn261 carries an N-linked (GlcNAc...) asparagine glycan. Residues Asn299 and Asn310 are each glycosylated (N-linked (GlcNAc...) asparagine). Residues 337 to 357 (LKKLSLFRNDNLDGGLEFLSF) form an LRR 11; degenerate repeat. LRR repeat units follow at residues 358–382 (NTQLERLDLSSNSLTGPIPSNISGL), 383–406 (QNLECLYLSSNHLNGSIPSWIFSL), 408–428 (SLVELDLSNNTFSGKIQEFKS), 429–452 (KTLSAVTLKQNKLKGRIPNSLLNQ), 454–476 (NLQLLLLSHNNISGHISSAICNL), 477–500 (KTLILLDLGSNNLEGTIPQCVVER), 502–524 (EYLSHLDLSKNRLSGTINTTFSV), 525–549 (GNILRVISLHGNKLTGKVPRSLINC), 551–572 (YLALLDLGNNQLNDTFPNWLGH), 573–597 (LSQLKILSLRSNKLHGPIKSSGNTN), 599–623 (FTRLQIMDLSYNGFSGNLPESILGN), 667–690 (LDSNMIINLSKNRFEGRIPSIIGD), 691–714 (LVGLRTLNLSHNVLEGHIPASFQN), 715–739 (LSVLESLDLSSNKISGEIPQQLASL), and 741–759 (FLEVLNLSHNHLVGCIPKG). N-linked (GlcNAc...) asparagine glycosylation is found at Asn378, Asn396, and Asn416. N-linked (GlcNAc...) asparagine glycosylation occurs at Asn464. N-linked (GlcNAc...) asparagine glycosylation is present at Asn519. N-linked (GlcNAc...) asparagine glycosylation is present at Asn563. 3 N-linked (GlcNAc...) asparagine glycosylation sites follow: Asn674, Asn698, and Asn714. Residues Asn746 and Asn767 are each glycosylated (N-linked (GlcNAc...) asparagine). Residues 760 to 812 (KQFDSFGNTSYQGNDGLCGFPLSKLCGGDDQVTTPAELDQEEEEEDSPMISWQ) form a C-cap/acidic domain region. A helical transmembrane segment spans residues 813-833 (GVLVGYGCGLVIGLSVIYIMW). Over 834 to 863 (STQYPAWFSRMHLKLEQIVTTRMKKHKKRY) the chain is Cytoplasmic.

The protein belongs to the RLP family.

It localises to the cell membrane. Functionally, involved in plant defense. Confers resistance to the fungal pathogen C.fulvum through recognition of the AVR9 elicitor protein. This Solanum pimpinellifolium (Currant tomato) protein is Receptor-like protein 9DC3.